The chain runs to 213 residues: Probable glutathione S-transferase DHAR1, cytosolic (213 aa).

Glutathione-binding residues include Lys8 and Asp19. Residues Lys8 and Asp19 each contribute to the L-ascorbate site. Residues 10–89 (AVGHPDTLGD…VIEEKYPTPS (80 aa)) enclose the GST N-terminal domain. The Nucleophile role is filled by Cys20. Glutathione contacts are provided by Lys47, Val60, Ser74, His160, and Trp207. A GST C-terminal domain is found at 73–213 (DSDVITQVIE…IAGWAPKVNA (141 aa)). Lys210 is a binding site for L-ascorbate.

This sequence belongs to the GST superfamily. DHAR family. As to quaternary structure, monomer.

The protein resides in the cytoplasm. The protein localises to the cytosol. The enzyme catalyses RX + glutathione = an S-substituted glutathione + a halide anion + H(+). It catalyses the reaction L-dehydroascorbate + 2 glutathione = glutathione disulfide + L-ascorbate. Its function is as follows. Involved in ascorbate homeostasis. Maintains redox pools of ascorbate by recycling dihydroascorbate (DHA) to ascorbate. Involved in scavenging reactive oxygen species (ROS) under oxidative stresses. Possesses dehydroascorbate reductase (DHAR) activity in vitro. May function via a ping-pong reaction mechanism with an electron transfer at the active site. Possesses chaperone-like activity in vitro. In Oryza sativa subsp. japonica (Rice), this protein is Probable glutathione S-transferase DHAR1, cytosolic.